The primary structure comprises 83 residues: Neurotoxin-1'' (83 aa).

An N-terminal signal peptide occupies residues 1–19; sequence MNYLVMISLALLLMIGVES. An LCN-type CS-alpha/beta domain is found at 21 to 82; sequence RDGYIVYPNN…PIKDTSRKCT (62 aa). 4 cysteine pairs are disulfide-bonded: Cys31–Cys81, Cys35–Cys53, Cys39–Cys63, and Cys43–Cys65. Residue Arg83 is a propeptide, removed by a carboxypeptidase (in neurotoxin-1/1').

It belongs to the long (4 C-C) scorpion toxin superfamily. Sodium channel inhibitor family. Alpha subfamily. As to expression, expressed by the venom gland.

Its subcellular location is the secreted. Functionally, alpha toxins bind voltage-independently at site-3 of sodium channels (Nav) and inhibit the inactivation of the activated channels, thereby blocking neuronal transmission. Is active against mammals and binds with high affinity rat brain synaptosomes. The sequence is that of Neurotoxin-1'' from Androctonus australis (Sahara scorpion).